We begin with the raw amino-acid sequence, 395 residues long: MIAVRHLTILGSTGSIGVSTLDVVARHPDRFRVVALTANKSVQKILEQCRRFEPRYAVLLDEASAELLQVEIRRAGLATEVLWGVDSLEKVASLPDVDTVMAAIVGAAGIRPTFAAAATGKRVLLANKETMVMAGRIFTDVVKENHATLLPIDSEHNAIFQSLPQHFSGDLRAVGVRRILLTASGGPFRQMPLAALENVTPGQACAHPNWVMGQKISVDSATMMNKGLEVIEAHWLFEASPEQIEVVVHPQSIIHSMVEYVDGSVLAQLGNPDMRTPIAHALGFPERIETGVNPLDMFKVARLDFEAPDFERFPCLRLAYQALASGGSAPAVLNAANEVAVDSFLKCLMPFTSIPAMIEDVMQTIGRRDIATLDDVLAADGMAREAAQEWLTCLA.

NADPH-binding residues include Thr-13, Gly-14, Ser-15, Ile-16, Lys-40, and Asn-127. A 1-deoxy-D-xylulose 5-phosphate-binding site is contributed by Lys-128. Position 129 (Glu-129) interacts with NADPH. Asp-153 lines the Mn(2+) pocket. The 1-deoxy-D-xylulose 5-phosphate site is built by Ser-154, Glu-155, Ser-184, and His-207. Glu-155 is a binding site for Mn(2+). Residue Gly-213 participates in NADPH binding. 4 residues coordinate 1-deoxy-D-xylulose 5-phosphate: Ser-220, Asn-225, Lys-226, and Glu-229. Glu-229 contacts Mn(2+).

It belongs to the DXR family. Mg(2+) serves as cofactor. The cofactor is Mn(2+).

The enzyme catalyses 2-C-methyl-D-erythritol 4-phosphate + NADP(+) = 1-deoxy-D-xylulose 5-phosphate + NADPH + H(+). It participates in isoprenoid biosynthesis; isopentenyl diphosphate biosynthesis via DXP pathway; isopentenyl diphosphate from 1-deoxy-D-xylulose 5-phosphate: step 1/6. Its function is as follows. Catalyzes the NADPH-dependent rearrangement and reduction of 1-deoxy-D-xylulose-5-phosphate (DXP) to 2-C-methyl-D-erythritol 4-phosphate (MEP). The chain is 1-deoxy-D-xylulose 5-phosphate reductoisomerase from Nitrosospira multiformis (strain ATCC 25196 / NCIMB 11849 / C 71).